The sequence spans 701 residues: DNA ligase (701 aa).

Residues 50–54 (DYEYD), 99–100 (SL), and Glu-130 each bind NAD(+). Catalysis depends on Lys-132, which acts as the N6-AMP-lysine intermediate. NAD(+) is bound by residues Arg-153, Glu-187, Lys-301, and Lys-325. Residues Cys-419, Cys-422, Cys-437, and Cys-442 each contribute to the Zn(2+) site. The region spanning 626–701 (NEHQKYMNKT…EIITEPFWDN (76 aa)) is the BRCT domain.

This sequence belongs to the NAD-dependent DNA ligase family. LigA subfamily. Mg(2+) serves as cofactor. Mn(2+) is required as a cofactor.

The enzyme catalyses NAD(+) + (deoxyribonucleotide)n-3'-hydroxyl + 5'-phospho-(deoxyribonucleotide)m = (deoxyribonucleotide)n+m + AMP + beta-nicotinamide D-nucleotide.. In terms of biological role, DNA ligase that catalyzes the formation of phosphodiester linkages between 5'-phosphoryl and 3'-hydroxyl groups in double-stranded DNA using NAD as a coenzyme and as the energy source for the reaction. It is essential for DNA replication and repair of damaged DNA. The protein is DNA ligase of Malacoplasma penetrans (strain HF-2) (Mycoplasma penetrans).